Here is a 138-residue protein sequence, read N- to C-terminus: Single-stranded DNA-binding protein 3 (138 aa).

The region spanning 1-104 (MINNIVLVGR…VVAENFQLLE (104 aa)) is the SSB domain. The span at 105 to 121 (SRNSQQQTNQSGNSSNS) shows a compositional bias: low complexity. Residues 105–138 (SRNSQQQTNQSGNSSNSYFGNANKMDISDDDLPF) are disordered. The short motif at 133 to 138 (DDDLPF) is the Important for interaction with partner proteins element.

In terms of assembly, homotetramer.

Plays an important role in DNA replication, recombination and repair. Binds to ssDNA and to an array of partner proteins to recruit them to their sites of action during DNA metabolism. The protein is Single-stranded DNA-binding protein 3 (ssb3) of Streptococcus agalactiae serotype V (strain ATCC BAA-611 / 2603 V/R).